We begin with the raw amino-acid sequence, 155 residues long: Biotin carboxyl carrier protein of acetyl-CoA carboxylase (155 aa).

The Biotinyl-binding domain occupies 72-155 (AASDELSGHL…EFDEPLIVIE (84 aa)). At lysine 121 the chain carries N6-biotinyllysine.

Homodimer.

Its pathway is lipid metabolism; fatty acid biosynthesis. Its function is as follows. This protein is a component of the acetyl coenzyme A carboxylase complex; first, biotin carboxylase catalyzes the carboxylation of the carrier protein and then the transcarboxylase transfers the carboxyl group to form malonyl-CoA. This chain is Biotin carboxyl carrier protein of acetyl-CoA carboxylase (accB), found in Haemophilus influenzae (strain ATCC 51907 / DSM 11121 / KW20 / Rd).